Consider the following 299-residue polypeptide: Protoheme IX farnesyltransferase (299 aa).

9 helical membrane-spanning segments follow: residues 26–46 (VNALIVFCAVIGMFLAVPDGL), 53–73 (FAATVGIACVAGAAAAMNCLI), 94–114 (LHSVEVLVFAGVLGGFGLSVL), 121–141 (LTMWLTLATFVGYAVIYTLLL), 149–169 (IVIGGASGAMPPVLGWAAVSG), 175–195 (ALLLFLIIFAWTPPHFWSLAL), 217–239 (YTRLSVLLYTCALFGVTLLPFAI), 243–265 (GWIYLVAAVTLGLRFVHYAWRLL), and 277–297 (FRFSIVYLSLLFAALLADHYL).

It belongs to the UbiA prenyltransferase family. Protoheme IX farnesyltransferase subfamily.

The protein resides in the cell inner membrane. It carries out the reaction heme b + (2E,6E)-farnesyl diphosphate + H2O = Fe(II)-heme o + diphosphate. It functions in the pathway porphyrin-containing compound metabolism; heme O biosynthesis; heme O from protoheme: step 1/1. Functionally, converts heme B (protoheme IX) to heme O by substitution of the vinyl group on carbon 2 of heme B porphyrin ring with a hydroxyethyl farnesyl side group. In Azoarcus sp. (strain BH72), this protein is Protoheme IX farnesyltransferase.